The sequence spans 599 residues: Beta-(1--&gt;2)glucan export ATP-binding/permease protein NdvA (599 aa).

An ABC transmembrane type-1 domain is found at 21–301; sequence TITMCVASVL…ISAFINQTVT (281 aa). 5 helical membrane passes run 22-42, 55-75, 156-176, 248-268, and 276-296; these read ITMCVASVLVALVTLAEPVLF, IFSPLLMWAALGGFNIMAAVF, MRMSLVLIVLGVIYVMIGQLV, MASTFSMVVVLVLGAYFVTKG, and IAFIGFAQLMIGRLDQISAFI. Residues 335 to 569 enclose the ABC transporter domain; the sequence is IVFDNVTYEF…GGRFSDLLRA (235 aa). 368–375 is an ATP binding site; the sequence is GPTGAGKT.

Belongs to the ABC transporter superfamily. Beta-(1--&gt;2)glucan exporter (TC 3.A.1.108.1) family. Homodimer.

It localises to the cell inner membrane. The enzyme catalyses [(1-&gt;2)-beta-D-glucosyl](n)(in) + ATP + H2O = [(1-&gt;2)-beta-D-glucosyl](n)(out) + ADP + phosphate + H(+). Involved in beta-(1--&gt;2)glucan export. Transmembrane domains (TMD) form a pore in the inner membrane and the ATP-binding domain (NBD) is responsible for energy generation. In Brucella melitensis biotype 1 (strain ATCC 23456 / CCUG 17765 / NCTC 10094 / 16M), this protein is Beta-(1--&gt;2)glucan export ATP-binding/permease protein NdvA.